The primary structure comprises 80 residues: Serine protease inhibitor Kazal-type 6 (80 aa).

An N-terminal signal peptide occupies residues M1 to S23. Q24 carries the pyrrolidone carboxylic acid modification. One can recognise a Kazal-like domain in the interval Q24 to C80. Disulfide bonds link C30-C62, C40-C59, and C48-C80.

It localises to the secreted. In terms of biological role, serine protease inhibitor selective for kallikreins. Efficiently inhibits KLK4, KLK5, KLK6, KLK7, KLK12, KLK13 and KLK14. Doesn't inhibit KLK8. The protein is Serine protease inhibitor Kazal-type 6 (SPINK6) of Homo sapiens (Human).